The primary structure comprises 47 residues: Defensin-like protein 1 (47 aa).

4 cysteine pairs are disulfide-bonded: Cys3–Cys47, Cys14–Cys36, Cys20–Cys41, and Cys24–Cys43.

Belongs to the DEFL family. Protease inhibitor I18 (RTI/MTI-2) subfamily.

This is Defensin-like protein 1 from Sorghum bicolor (Sorghum).